We begin with the raw amino-acid sequence, 180 residues long: Inner membrane-spanning protein YciB (180 aa).

Helical transmembrane passes span 4-24, 25-45, 49-69, 76-96, 118-138, and 150-170; these read LLSE…GGGI, QSAT…CYII, VSKL…ITLI, IKIK…MSGI, IILS…NEVV, and FKVF…LPLL.

This sequence belongs to the YciB family.

Its subcellular location is the cell inner membrane. Its function is as follows. Plays a role in cell envelope biogenesis, maintenance of cell envelope integrity and membrane homeostasis. This is Inner membrane-spanning protein YciB from Rickettsia typhi (strain ATCC VR-144 / Wilmington).